A 396-amino-acid chain; its full sequence is 8-amino-7-oxononanoate synthase (396 aa).

R29 contributes to the substrate binding site. A pyridoxal 5'-phosphate-binding site is contributed by 116–117; it reads GY. A substrate-binding site is contributed by H141. Residues S187, H215, and T243 each coordinate pyridoxal 5'-phosphate. At K246 the chain carries N6-(pyridoxal phosphate)lysine. Substrate is bound at residue T360.

The protein belongs to the class-II pyridoxal-phosphate-dependent aminotransferase family. BioF subfamily. As to quaternary structure, homodimer. Pyridoxal 5'-phosphate is required as a cofactor.

The enzyme catalyses 6-carboxyhexanoyl-[ACP] + L-alanine + H(+) = (8S)-8-amino-7-oxononanoate + holo-[ACP] + CO2. The protein operates within cofactor biosynthesis; biotin biosynthesis. Functionally, catalyzes the decarboxylative condensation of pimeloyl-[acyl-carrier protein] and L-alanine to produce 8-amino-7-oxononanoate (AON), [acyl-carrier protein], and carbon dioxide. The sequence is that of 8-amino-7-oxononanoate synthase from Nitrosospira multiformis (strain ATCC 25196 / NCIMB 11849 / C 71).